The chain runs to 345 residues: Centromere protein L (345 aa).

A phosphoserine mark is found at Ser-40 and Ser-54.

The protein belongs to the CENP-L/IML3 family. Component of the CENPA-CAD complex, composed of CENPI, CENPK, CENPL, CENPO, CENPP, CENPQ, CENPR and CENPS. The CENPA-CAD complex interacts with the CENPA-NAC complex, at least composed of CENPA, CENPC, CENPH, CENPM, CENPN, CENPT and CENPU.

The protein localises to the nucleus. It is found in the chromosome. It localises to the centromere. In terms of biological role, component of the CENPA-CAD (nucleosome distal) complex, a complex recruited to centromeres which is involved in assembly of kinetochore proteins, mitotic progression and chromosome segregation. May be involved in incorporation of newly synthesized CENPA into centromeres via its interaction with the CENPA-NAC complex. This chain is Centromere protein L (Cenpl), found in Rattus norvegicus (Rat).